The following is a 1044-amino-acid chain: Integrin alpha-8 (1044 aa).

An N-terminal signal peptide occupies residues 1-23; that stretch reads MPRRQPPRPLLLLSALLCAPASA. Residues 24–991 are Extracellular-facing; the sequence is FNLDEEKLTV…WSTPNVSFVI (968 aa). 7 FG-GAP repeats span residues 28–90, 104–165, 170–222, 236–288, 289–354, 355–413, and 417–480; these read EEKL…RCRQ, NGTR…AYAE, RNSN…ITNY, QTGV…SSDL, TFIQ…FLFR, DPQI…GLKT, and QVLN…LNPM. Asn66 carries an N-linked (GlcNAc...) asparagine glycan. Cys81 and Cys88 are joined by a disulfide. Asn104 carries an N-linked (GlcNAc...) asparagine glycan. A disulfide bridge connects residues Cys132 and Cys153. Residue Asn159 is glycosylated (N-linked (GlcNAc...) asparagine). A disulfide bridge connects residues Cys169 and Cys182. Residue Asn221 is glycosylated (N-linked (GlcNAc...) asparagine). 4 residues coordinate Ca(2+): Glu257, Thr259, Asp261, and Glu265. N-linked (GlcNAc...) asparagine glycans are attached at residues Asn284 and Asn293. Residues Asp311, Asn313, Asp315, Leu317, Asp319, Asp377, Asn379, Asp381, Tyr383, and Asp385 each coordinate Ca(2+). Positions 437–439 match the Cell attachment site motif; it reads RGD. The Ca(2+) site is built by Asp441, Asp443, Asn445, Tyr447, and Asp449. An N-linked (GlcNAc...) asparagine glycan is attached at Asn486. Disulfide bonds link Cys489/Cys500 and Cys506/Cys562. A glycan (N-linked (GlcNAc...) asparagine) is linked at Asn587. 2 disulfides stabilise this stretch: Cys623–Cys629 and Cys695–Cys708. Residues Asn701, Asn719, Asn751, Asn762, Asn818, Asn877, and Asn904 are each glycosylated (N-linked (GlcNAc...) asparagine). 2 disulfide bridges follow: Cys849–Cys905 and Cys910–Cys915. N-linked (GlcNAc...) asparagine glycans are attached at residues Asn952 and Asn986. The helical transmembrane segment at 992–1015 threads the bilayer; the sequence is PLWVIILAIMLGLLVLAVLTLALW. Topologically, residues 1016-1044 are cytoplasmic; that stretch reads KCGFFDRARPPQDDMADREQLTNNKTTDA.

Belongs to the integrin alpha chain family. As to quaternary structure, heterodimer of an alpha and a beta subunit. The alpha subunit is composed of a heavy and a light chain linked by a disulfide bond. Alpha-8 associates with beta-1. Prominently expressed on axons and on cells in contact with basal laminae in embryos.

The protein localises to the membrane. Its subcellular location is the cell membrane. Integrin alpha-8/beta-1 functions in the genesis of kidney and probably of other organs by regulating the recruitment of mesenchymal cells into epithelial structures. It recognizes the sequence R-G-D in a wide array of ligands including TNC, FN1, SPP1, TGFB1, TGFB3 and VTN. NPNT is probably its functional ligand in kidney genesis. Neuronal receptor for TNC it mediates cell-cell interactions and regulates neurite outgrowth of sensory and motor neurons. The chain is Integrin alpha-8 (ITGA8) from Gallus gallus (Chicken).